We begin with the raw amino-acid sequence, 90 residues long: UPF0237 protein MJ1558 (90 aa).

An ACT domain is found at 5 to 79; the sequence is VVSVIGQDRT…EELGVQVIVQ (75 aa).

The protein belongs to the UPF0237 family.

This chain is UPF0237 protein MJ1558, found in Methanocaldococcus jannaschii (strain ATCC 43067 / DSM 2661 / JAL-1 / JCM 10045 / NBRC 100440) (Methanococcus jannaschii).